Here is a 282-residue protein sequence, read N- to C-terminus: 2-dehydro-3-deoxyphosphooctonate aldolase (282 aa).

The protein belongs to the KdsA family.

It is found in the cytoplasm. It carries out the reaction D-arabinose 5-phosphate + phosphoenolpyruvate + H2O = 3-deoxy-alpha-D-manno-2-octulosonate-8-phosphate + phosphate. The protein operates within carbohydrate biosynthesis; 3-deoxy-D-manno-octulosonate biosynthesis; 3-deoxy-D-manno-octulosonate from D-ribulose 5-phosphate: step 2/3. It participates in bacterial outer membrane biogenesis; lipopolysaccharide biosynthesis. The chain is 2-dehydro-3-deoxyphosphooctonate aldolase from Shewanella woodyi (strain ATCC 51908 / MS32).